The primary structure comprises 412 residues: Argininosuccinate synthase (412 aa).

ATP-binding positions include 16-24 (AYSGGLDTS) and A44. Positions 96 and 101 each coordinate L-citrulline. G126 serves as a coordination point for ATP. Residues T128, N132, and D133 each coordinate L-aspartate. N132 contributes to the L-citrulline binding site. L-citrulline contacts are provided by R136, S185, S194, E270, and Y282.

Belongs to the argininosuccinate synthase family. Type 1 subfamily. As to quaternary structure, homotetramer.

Its subcellular location is the cytoplasm. It carries out the reaction L-citrulline + L-aspartate + ATP = 2-(N(omega)-L-arginino)succinate + AMP + diphosphate + H(+). Its pathway is amino-acid biosynthesis; L-arginine biosynthesis; L-arginine from L-ornithine and carbamoyl phosphate: step 2/3. This chain is Argininosuccinate synthase, found in Shewanella baltica (strain OS185).